Consider the following 320-residue polypeptide: Putative polysaccharide deacetylase (320 aa).

The 235-residue stretch at 69–303 (RSIESCFEYG…ITSKEGVWVA (235 aa)) folds into the NodB homology domain.

It belongs to the polysaccharide deacetylase family. Homodimer.

It is found in the prospore. Its function is as follows. May deacetylate chitin. Required for spore formation. This chain is Putative polysaccharide deacetylase, found in Schizosaccharomyces pombe (strain 972 / ATCC 24843) (Fission yeast).